We begin with the raw amino-acid sequence, 635 residues long: Threonine--tRNA ligase (635 aa).

One can recognise a TGS domain in the interval 1-62; sequence MITITLPDGS…EHDAILRIIT (62 aa). The interval 244–535 is catalytic; that stretch reads DHRKIGKAQD…LIEHYAGIWP (292 aa). Zn(2+)-binding residues include Cys-335, His-386, and His-512.

Belongs to the class-II aminoacyl-tRNA synthetase family. As to quaternary structure, homodimer. The cofactor is Zn(2+).

It is found in the cytoplasm. The enzyme catalyses tRNA(Thr) + L-threonine + ATP = L-threonyl-tRNA(Thr) + AMP + diphosphate + H(+). Its function is as follows. Catalyzes the attachment of threonine to tRNA(Thr) in a two-step reaction: L-threonine is first activated by ATP to form Thr-AMP and then transferred to the acceptor end of tRNA(Thr). Also edits incorrectly charged L-seryl-tRNA(Thr). The sequence is that of Threonine--tRNA ligase from Xylella fastidiosa (strain M23).